The primary structure comprises 398 residues: MASESDASSIATLSCARCEKPAHLQCPKCIDLKLPREQASFCTQECFKAAWSSHKSVHVKAQLSSIGDQNSDLISQGWLYCVKKGQARTPKLPHFDWTGPLKQYPISTKRVVPAEIEKPDWAIDGTPKVEPNSDLQHVVEIKTPEQIQRMRETCKIAREVLDAAARVIHPGVTTDEIDRVVHEATIAAGGYPSPLNYYFFPKSCCTSVNEVICHGIPDARKLEDGDIVNVDVTVCYKGCHGDLNETYFVGNVDEASRQLVKCTYECLEKAIAIVKPGVRFREIGEIVNRHATMSGLSVVRSYCGHGIGDLFHCAPNIPHYARNKAVGVMKAGQTFTIEPMINAGGWRDRTWPDGWTAVTADGKRSAQFEHTLLVTETGVEVLTARLPSSPDVYPWLTK.

N-acetylalanine is present on A2. The segment at T12–S65 adopts a C6H2-type zinc-finger fold. Positions 15, 18, 26, 29, 42, 46, 54, and 58 each coordinate Zn(2+). An a protein-binding site is contributed by H214. Zn(2+)-binding residues include D231, D242, and H305. H312 is a binding site for a protein. Zn(2+) is bound by residues E338 and E369.

It belongs to the peptidase M24A family. Methionine aminopeptidase type 1 subfamily. As to quaternary structure, associates with the 60S ribosomal subunit of the 80S translational complex. Zn(2+) is required as a cofactor. It depends on Co(2+) as a cofactor. The cofactor is Mn(2+). Fe(2+) serves as cofactor. In terms of tissue distribution, ubiquitous.

It localises to the cytoplasm. The catalysed reaction is Release of N-terminal amino acids, preferentially methionine, from peptides and arylamides.. In terms of biological role, cotranslationally removes the N-terminal methionine from nascent proteins. The N-terminal methionine is often cleaved when the second residue in the primary sequence is small and uncharged (Met-Ala-, Cys, Gly, Pro, Ser, Thr, or Val). The sequence is that of Methionine aminopeptidase 1A (MAP1A) from Arabidopsis thaliana (Mouse-ear cress).